A 248-amino-acid polypeptide reads, in one-letter code: NAD(P)H-quinone oxidoreductase subunit K (248 aa).

[4Fe-4S] cluster contacts are provided by cysteine 66, cysteine 67, cysteine 131, and cysteine 162.

Belongs to the complex I 20 kDa subunit family. In terms of assembly, NDH-1 can be composed of about 15 different subunits; different subcomplexes with different compositions have been identified which probably have different functions. Requires [4Fe-4S] cluster as cofactor.

Its subcellular location is the cellular thylakoid membrane. It catalyses the reaction a plastoquinone + NADH + (n+1) H(+)(in) = a plastoquinol + NAD(+) + n H(+)(out). The catalysed reaction is a plastoquinone + NADPH + (n+1) H(+)(in) = a plastoquinol + NADP(+) + n H(+)(out). Its function is as follows. NDH-1 shuttles electrons from an unknown electron donor, via FMN and iron-sulfur (Fe-S) centers, to quinones in the respiratory and/or the photosynthetic chain. The immediate electron acceptor for the enzyme in this species is believed to be plastoquinone. Couples the redox reaction to proton translocation, and thus conserves the redox energy in a proton gradient. Cyanobacterial NDH-1 also plays a role in inorganic carbon-concentration. The polypeptide is NAD(P)H-quinone oxidoreductase subunit K (Synechococcus sp. (strain WH7803)).